The sequence spans 329 residues: Ribosomal RNA small subunit methyltransferase H (329 aa).

S-adenosyl-L-methionine-binding positions include 34 to 36 (GGY), D52, F79, D100, and Q107. Residues 285 to 329 (GEDEVAHNPRARSAKLRAAERTSAPAHKDDQSSSWPRLSDVMRGG) form a disordered region.

It belongs to the methyltransferase superfamily. RsmH family.

The protein resides in the cytoplasm. The catalysed reaction is cytidine(1402) in 16S rRNA + S-adenosyl-L-methionine = N(4)-methylcytidine(1402) in 16S rRNA + S-adenosyl-L-homocysteine + H(+). In terms of biological role, specifically methylates the N4 position of cytidine in position 1402 (C1402) of 16S rRNA. The polypeptide is Ribosomal RNA small subunit methyltransferase H (Bradyrhizobium diazoefficiens (strain JCM 10833 / BCRC 13528 / IAM 13628 / NBRC 14792 / USDA 110)).